Consider the following 319-residue polypeptide: Thioredoxin reductase (319 aa).

Residues 11–14 (SGPA), 40–41 (VA), Gln45, Asn54, Val87, Cys145, Asp288, and 295–297 (RQA) each bind FAD. A disulfide bridge connects residues Cys142 and Cys145.

This sequence belongs to the class-II pyridine nucleotide-disulfide oxidoreductase family. As to quaternary structure, homodimer. Requires FAD as cofactor.

The protein resides in the cytoplasm. It carries out the reaction [thioredoxin]-dithiol + NADP(+) = [thioredoxin]-disulfide + NADPH + H(+). The protein is Thioredoxin reductase (TRR1) of Eremothecium gossypii (strain ATCC 10895 / CBS 109.51 / FGSC 9923 / NRRL Y-1056) (Yeast).